A 1036-amino-acid polypeptide reads, in one-letter code: Presequence protease, mitochondrial (1036 aa).

A mitochondrion-targeting transit peptide spans 1–15 (MWRFSGRRGLCAVQR). His104 provides a ligand contact to Zn(2+). Glu107 (proton acceptor) is an active-site residue. Zn(2+) is bound by residues His108 and Glu205. A disulfide bridge connects residues Cys119 and Cys556. Lys759 carries the N6-acetyllysine modification. N6-acetyllysine; alternate is present on Lys770. Lys770 is modified (N6-succinyllysine; alternate). Positions 806–833 (SKKERKPVRPHIVEKPTPSGPSGAAHVS) are disordered. Residue Lys848 is modified to N6-succinyllysine. Lys883 is modified (N6-acetyllysine). Lys945 carries the post-translational modification N6-succinyllysine.

Belongs to the peptidase M16 family. PreP subfamily. In terms of assembly, monomer and homodimer; homodimerization is induced by binding of the substrate. Requires Zn(2+) as cofactor. A disulfide bond locks the enzyme in the closed conformation preventing substrate entry into the catalytic chamber.

The protein localises to the mitochondrion matrix. Mainly exists in a closed and catalytically competent conformation but a closed-to-open switch allows substrate entry into the catalytic chamber. Substrate binding induces closure and dimerization. A disulfide bond may lock the enzyme in a closed conformation preventing substrate entry into the catalytic chamber, participating in redox regulation of the enzyme. Inhibited by metal-chelating agents. Inhibited by nickel and zinc excess, and slightly activated by manganese. Functionally, metalloendopeptidase of the mitochondrial matrix that functions in peptide cleavage and degradation rather than in protein processing. Has an ATP-independent activity. Specifically cleaves peptides in the range of 5 to 65 residues. Shows a preference for cleavage after small polar residues and before basic residues, but without any positional preference. Degrades the transit peptides of mitochondrial proteins after their cleavage. Also degrades other unstructured peptides. It is also able to degrade amyloid-beta protein 40, one of the peptides produced by APP processing, when it accumulates in mitochondrion. It is a highly efficient protease, at least toward amyloid-beta protein 40. Cleaves that peptide at a specific position and is probably not processive, releasing digested peptides intermediates that can be further cleaved subsequently. It is also able to degrade amyloid-beta protein 42. The chain is Presequence protease, mitochondrial from Mus musculus (Mouse).